Consider the following 452-residue polypeptide: Translation initiation factor eIF2B subunit gamma (452 aa).

N-acetylmethionine is present on Met1. Phosphoserine is present on Ser261.

This sequence belongs to the eIF-2B gamma/epsilon subunits family. Component of the translation initiation factor 2B (eIF2B) complex which is a heterodecamer of two sets of five different subunits: alpha, beta, gamma, delta and epsilon. Subunits alpha, beta and delta comprise a regulatory subcomplex and subunits epsilon and gamma comprise a catalytic subcomplex. Within the complex, the hexameric regulatory complex resides at the center, with the two heterodimeric catalytic subcomplexes bound on opposite sides.

The protein localises to the cytoplasm. The protein resides in the cytosol. Activated by the chemical integrated stress response (ISR) inhibitor ISRIB which stimulates guanine nucleotide exchange factor activity for both phosphorylated and unphosphorylated eIF2. Its function is as follows. Acts as a component of the translation initiation factor 2B (eIF2B) complex, which catalyzes the exchange of GDP for GTP on the eukaryotic initiation factor 2 (eIF2) complex gamma subunit. Its guanine nucleotide exchange factor activity is repressed when bound to eIF2 complex phosphorylated on the alpha subunit, thereby limiting the amount of methionyl-initiator methionine tRNA available to the ribosome and consequently global translation is repressed. The polypeptide is Translation initiation factor eIF2B subunit gamma (EIF2B3) (Bos taurus (Bovine)).